A 47-amino-acid chain; its full sequence is Large ribosomal subunit protein eL40 (47 aa).

It belongs to the eukaryotic ribosomal protein eL40 family.

In Methanocaldococcus jannaschii (strain ATCC 43067 / DSM 2661 / JAL-1 / JCM 10045 / NBRC 100440) (Methanococcus jannaschii), this protein is Large ribosomal subunit protein eL40.